Here is a 132-residue protein sequence, read N- to C-terminus: uncharacterized protein (132 aa).

Residues 107 to 132 (LNTFSGSGQKHSQPGSGQHPFSFRKD) are disordered. The segment covering 108 to 122 (NTFSGSGQKHSQPGS) has biased composition (polar residues).

This is an uncharacterized protein from Bacillus subtilis (strain 168).